Consider the following 238-residue polypeptide: Neuromodulin (238 aa).

The tract at residues 1-238 (MLCCMRRTKQ…EEPEADQEHA (238 aa)) is disordered. S-palmitoyl cysteine attachment occurs at residues cysteine 3 and cysteine 4. Residues 9 to 32 (KQVEKNDDDQKIEQDGIKPEDKAH) show a composition bias toward basic and acidic residues. The 30-residue stretch at 31–60 (AHKAATKIQASFRGHITRKKLKGEKKDDVQ) folds into the IQ domain. Serine 41 bears the Phosphoserine; by PHK and PKC mark. A compositionally biased stretch (basic and acidic residues) spans 54–83 (EKKDDVQAAEAEANKKDEAPVADGVEKKGE). Low complexity predominate over residues 84 to 95 (GTTTAEAAPATG). Residues 97–116 (KPDEPGKAGETPSEEKKGEG) are compositionally biased toward basic and acidic residues. Residues 119-130 (ATEQAAPQAPAS) show a composition bias toward low complexity. Residues 139–154 (ETESATKASTDNSPSS) show a composition bias toward polar residues. Phosphoserine occurs at positions 151, 153, and 154. The span at 155–167 (KAEDAPAKEEPKQ) shows a compositional bias: basic and acidic residues. Residues 168–199 (ADVPAAVTAAAATTPAAEDAAAKATAQPPTET) show a composition bias toward low complexity. Residue threonine 181 is modified to Phosphothreonine. Residues serine 202 and serine 203 each carry the phosphoserine; by CK2 modification. Residues 213 to 225 (DETKPKESARQDE) show a composition bias toward basic and acidic residues. Acidic residues predominate over residues 226-238 (GKEEEPEADQEHA).

The protein belongs to the neuromodulin family. As to quaternary structure, identified in a complex containing FGFR4, NCAM1, CDH2, PLCG1, FRS2, SRC, SHC1, GAP43 and CTTN. Interacts (via IQ domain) with calmodulin. Binds calmodulin with a greater affinity in the absence of Ca(2+) than in its presence. Phosphorylated. Phosphorylation of this protein by a protein kinase C is specifically correlated with certain forms of synaptic plasticity. Post-translationally, palmitoylated by ZDHHC3. Palmitoylation is regulated by ARF6 and is essential for plasma membrane association and axonal and dendritic filopodia induction. Deacylated by LYPLA2.

It is found in the cell membrane. Its subcellular location is the cell projection. The protein localises to the growth cone membrane. The protein resides in the synapse. It localises to the filopodium membrane. It is found in the perikaryon. Its subcellular location is the dendrite. The protein localises to the axon. The protein resides in the cytoplasm. This protein is associated with nerve growth. It is a major component of the motile 'growth cones' that form the tips of elongating axons. Plays a role in axonal and dendritic filopodia induction. This Homo sapiens (Human) protein is Neuromodulin (GAP43).